The sequence spans 573 residues: Splicing factor U2af large subunit B (573 aa).

Acidic residues predominate over residues Met1 to Asp12. A disordered region spans residues Met1–Leu187. Residues Ser38–Ser145 show a composition bias toward basic and acidic residues. The segment covering Ser161 to Arg173 has biased composition (basic residues). 3 consecutive RRM domains span residues Arg239–Asp322, Asp359–Gln437, and Glu478–Asn564.

This sequence belongs to the splicing factor SR family. Expressed in stems, leaves and apical buds.

The protein resides in the nucleus. Its function is as follows. Necessary for the splicing of pre-mRNA. Binds to the U -enriched regions of plant introns. This is Splicing factor U2af large subunit B (U2AF65B) from Nicotiana plumbaginifolia (Leadwort-leaved tobacco).